The following is a 36-amino-acid chain: MVHFIFIALRSMRFMRRLVRNLQYLLLPITSSLLFI.

Its subcellular location is the mitochondrion. This is an uncharacterized protein from Saccharomyces cerevisiae (strain ATCC 204508 / S288c) (Baker's yeast).